A 380-amino-acid polypeptide reads, in one-letter code: Cytochrome b (380 aa).

4 consecutive transmembrane segments (helical) span residues 33–53 (FGSL…FLAM), 77–98 (WLIR…YLHI), 113–133 (WNIG…GYVL), and 178–198 (FFAF…IHLI). Residues H83 and H97 each coordinate heme b. Heme b contacts are provided by H182 and H196. Position 201 (H201) interacts with a ubiquinone. Transmembrane regions (helical) follow at residues 226 to 246 (YKDL…ALFS), 288 to 308 (LGGV…PVLH), 320 to 340 (FSQF…WIGG), and 347 to 367 (FIII…ILVP).

It belongs to the cytochrome b family. As to quaternary structure, the cytochrome bc1 complex contains 3 respiratory subunits (MT-CYB, CYC1 and UQCRFS1), 2 core proteins (UQCRC1 and UQCRC2) and probably 6 low-molecular weight proteins. It depends on heme b as a cofactor.

It localises to the mitochondrion inner membrane. Functionally, component of the ubiquinol-cytochrome c reductase complex (complex III or cytochrome b-c1 complex) that is part of the mitochondrial respiratory chain. The b-c1 complex mediates electron transfer from ubiquinol to cytochrome c. Contributes to the generation of a proton gradient across the mitochondrial membrane that is then used for ATP synthesis. This Astronotus ocellatus (Oscar) protein is Cytochrome b (mt-cyb).